The chain runs to 386 residues: MKWLLLLSLVALSECYIYKVPLVKKKSLRKNLMEQGLLQDYLKTHSINPASKYLKEAASMMATQPLENYMDMEYFGTIGIGTPPQEFTVIFDTGSSNLWVPSVYCSSPACSNHNRFNPQQSSTYQGTNQKLSVAYGTGSMTGILGYDTVQVGGITDTNQIFGLSETEPGSFLYYAPFDGILGLAYPSIASSGATPVFDNIWNQGLVSQDLFSVYLSSNDQGGSVVMFGGIDSSYFTGNLNWVPLSSETYWQITVDSITMNGQVIACSGSCQAIVDTGTSLLSGPTNAIASIQGYIGASQNANGEMVVSCSAINTLPNIVFTINGVQYPLPPSAYVLQSQQGCTSGFQGMDIPTSSGELWILGDVFIRQYFTVFDRGNNQVGLAPVA.

The first 15 residues, 1 to 15 (MKWLLLLSLVALSEC), serve as a signal peptide directing secretion. The propeptide at 16–60 (YIYKVPLVKKKSLRKNLMEQGLLQDYLKTHSINPASKYLKEAASM) is activation peptide. Positions 74-383 (YFGTIGIGTP…DRGNNQVGLA (310 aa)) constitute a Peptidase A1 domain. Residue aspartate 92 is part of the active site. 2 disulfide bridges follow: cysteine 105–cysteine 110 and cysteine 266–cysteine 270. The active site involves aspartate 275. A disulfide bond links cysteine 309 and cysteine 342.

This sequence belongs to the peptidase A1 family.

The protein localises to the secreted. The enzyme catalyses Preferential cleavage: hydrophobic, preferably aromatic, residues in P1 and P1' positions. Cleaves 1-Phe-|-Val-2, 4-Gln-|-His-5, 13-Glu-|-Ala-14, 14-Ala-|-Leu-15, 15-Leu-|-Tyr-16, 16-Tyr-|-Leu-17, 23-Gly-|-Phe-24, 24-Phe-|-Phe-25 and 25-Phe-|-Tyr-26 bonds in the B chain of insulin.. In terms of biological role, shows particularly broad specificity; although bonds involving phenylalanine and leucine are preferred, many others are also cleaved to some extent. The protein is Pepsin A (PGA) of Rhinolophus ferrumequinum (Greater horseshoe bat).